Reading from the N-terminus, the 242-residue chain is uncharacterized protein (242 aa).

Residues 3-116 enclose the Response regulatory domain; it reads TALVIDDEQF…RLNKTVKRLN (114 aa). Asp-54 is subject to 4-aspartylphosphate. Positions 139–240 constitute an HTH LytTR-type domain; it reads IPCIGHNRIV…LKVLKEMLGI (102 aa).

This is an uncharacterized protein from Vibrio parahaemolyticus serotype O3:K6 (strain RIMD 2210633).